The primary structure comprises 303 residues: Centromere protein O (303 aa).

The stretch at 38 to 77 forms a coiled coil; sequence AALRKNQELVLELRKKRDELKAKIERHKAEIQAFRGREEA.

This sequence belongs to the CENP-O/MCM21 family.

The protein resides in the nucleus. It is found in the chromosome. Its subcellular location is the centromere. Its function is as follows. Probable component of a centromeric complex involved in assembly of kinetochore proteins, mitotic progression and chromosome segregation. The protein is Centromere protein O (cenpo) of Xenopus tropicalis (Western clawed frog).